A 739-amino-acid chain; its full sequence is AN1-type zinc finger protein 4 (739 aa).

In terms of domain architecture, Ubiquitin-like spans 54-129 (MELFIETLTG…LKLVLAMRGG (76 aa)). A compositionally biased stretch (basic residues) spans 246–255 (KPKKVVKVKP). Disordered stretches follow at residues 246–270 (KPKK…STAA) and 287–316 (LPSG…RPVS). Residues 673–720 (KKIMKHCFLCGKKTGLATSFECRCGNNFCASHRYAEAHGCTYDYKSAG) form an AN1-type zinc finger. Cys-679, Cys-682, Cys-694, Cys-696, Cys-701, His-704, His-710, and Cys-712 together coordinate Zn(2+).

The sequence is that of AN1-type zinc finger protein 4 (Zfand4) from Mus musculus (Mouse).